The chain runs to 185 residues: Ribosome-recycling factor (185 aa).

Belongs to the RRF family.

The protein localises to the cytoplasm. In terms of biological role, responsible for the release of ribosomes from messenger RNA at the termination of protein biosynthesis. May increase the efficiency of translation by recycling ribosomes from one round of translation to another. The sequence is that of Ribosome-recycling factor from Tolumonas auensis (strain DSM 9187 / NBRC 110442 / TA 4).